Here is a 200-residue protein sequence, read N- to C-terminus: Recombination protein RecR (200 aa).

The C4-type zinc finger occupies cysteine 57–cysteine 72. A Toprim domain is found at threonine 80–proline 175.

It belongs to the RecR family.

May play a role in DNA repair. It seems to be involved in an RecBC-independent recombinational process of DNA repair. It may act with RecF and RecO. The chain is Recombination protein RecR from Pseudomonas entomophila (strain L48).